The primary structure comprises 405 residues: MEPGAGGRNTARAQRAGSPNTPPPREQERKLEQEKLSGVVKSVHRRLRKKYREVGDFDKIWREHCEDEETLCEYAVAMKNLADNHWAKTCEGEGRIEWCCSVCREYFQNGGKRKALEKDEKRAVLATKTTPALNMHESSQLEGHLTNLSFTNPEFITELLQASGKIRLLDVGSCFNPFLKFEEFLTVGIDIVPAVESVYKCDFLNLQLQQPLQLAQDAIDAFLKQLKNPIDSLPGELFHVVVFSLLLSYFPSPYQRWICCKKAHELLVLNGLLLIITPDSSHQNRHAMMMKSWKIAIESLGFKRFKYSKFSHMHLMAFRKISLKTTSDLVSRNYPGMLYIPQDFNSIEDEEYSNPSCYVRSDIEDEQLAYGFTELPDAPYDSDSGESQASSIPFYELEDPILLLS.

The tract at residues 1-34 (MEPGAGGRNTARAQRAGSPNTPPPREQERKLEQE) is disordered. Over residues 25-34 (REQERKLEQE) the composition is skewed to basic and acidic residues. Residues arginine 95, glycine 172, aspartate 190, aspartate 202, phenylalanine 203, and serine 244 each coordinate S-adenosyl-L-methionine.

It belongs to the BMT2/SAMTOR family. Interacts with the DEPDC5 subunit of the GATOR1 complex; interaction is disrupted when SAMTOR binds S-adenosyl-L-methionine. Interacts with the KICSTOR complex; interaction is disrupted when SAMTOR binds S-adenosyl-L-methionine.

S-adenosyl-L-methionine-binding protein that acts as an inhibitor of mTORC1 signaling via interaction with the GATOR1 and KICSTOR complexes. Acts as a sensor of S-adenosyl-L-methionine to signal methionine sufficiency to mTORC1: in presence of methionine, binds S-adenosyl-L-methionine, leading to disrupt interaction with the GATOR1 and KICSTOR complexes and promote mTORC1 signaling. Upon methionine starvation, S-adenosyl-L-methionine levels are reduced, thereby promoting the association with GATOR1 and KICSTOR, leading to inhibit mTORC1 signaling. Probably also acts as a S-adenosyl-L-methionine-dependent methyltransferase (Potential). The protein is S-adenosylmethionine sensor upstream of mTORC1 of Homo sapiens (Human).